Consider the following 325-residue polypeptide: Phosphate acyltransferase (325 aa).

Belongs to the PlsX family. As to quaternary structure, homodimer. Probably interacts with PlsY.

The protein localises to the cytoplasm. The enzyme catalyses a fatty acyl-[ACP] + phosphate = an acyl phosphate + holo-[ACP]. It participates in lipid metabolism; phospholipid metabolism. Catalyzes the reversible formation of acyl-phosphate (acyl-PO(4)) from acyl-[acyl-carrier-protein] (acyl-ACP). This enzyme utilizes acyl-ACP as fatty acyl donor, but not acyl-CoA. The chain is Phosphate acyltransferase from Staphylococcus epidermidis (strain ATCC 12228 / FDA PCI 1200).